The primary structure comprises 397 residues: Homeobox protein knotted-1-like 2 (397 aa).

Disordered stretches follow at residues 43–68 (TFHL…SPGT), 172–191 (FEAR…DPEL), and 233–276 (NNNA…PRAE). The span at 49–58 (SGGGGGGGSG) shows a compositional bias: gly residues. Positions 279–299 (ELKNHLLRKYSGYLSSLKQEL) constitute an ELK domain. Positions 300 to 363 (SKKKKKGKLP…NQRKRHWKPS (64 aa)) form a DNA-binding region, homeobox; TALE-type.

It belongs to the TALE/KNOX homeobox family. As to expression, expressed only in the stems.

It localises to the nucleus. Functionally, probably binds to the DNA sequence 5'-TGAC-3'. The protein is Homeobox protein knotted-1-like 2 of Malus domestica (Apple).